An 854-amino-acid polypeptide reads, in one-letter code: Translation initiation factor IF-2 (854 aa).

Disordered regions lie at residues 52-79 and 128-265; these read RQHG…RDGG and RKQE…HGFQ. Residues 61-75 are compositionally biased toward polar residues; it reads SQRITLQRKTTSTLS. 2 stretches are compositionally biased toward basic and acidic residues: residues 128-150 and 211-232; these read RKQE…RQEA and VRHD…DNKR. The segment covering 247–257 has biased composition (basic residues); sequence RGKLGRKNKKP. The 170-residue stretch at 354–523 folds into the tr-type G domain; that stretch reads KRAPVVTVMG…LLQAEVLELT (170 aa). Positions 363–370 are G1; the sequence is GHVDHGKT. Residue 363 to 370 coordinates GTP; sequence GHVDHGKT. Residues 388–392 form a G2 region; the sequence is GITQH. The interval 409–412 is G3; the sequence is DTPG. Residue 409–413 coordinates GTP; sequence DTPGH. The tract at residues 463–466 is G4; that stretch reads TKID. The segment at 499-501 is G5; that stretch reads SAK.

Belongs to the TRAFAC class translation factor GTPase superfamily. Classic translation factor GTPase family. IF-2 subfamily.

It is found in the cytoplasm. Functionally, one of the essential components for the initiation of protein synthesis. Protects formylmethionyl-tRNA from spontaneous hydrolysis and promotes its binding to the 30S ribosomal subunits. Also involved in the hydrolysis of GTP during the formation of the 70S ribosomal complex. In Marinomonas sp. (strain MWYL1), this protein is Translation initiation factor IF-2.